Here is a 396-residue protein sequence, read N- to C-terminus: Orotidine 5'-phosphate decarboxylase (396 aa).

Substrate is bound by residues D46, 68 to 70 (KTH), 103 to 112 (DRKFVDIGST), Y346, and R365. The active-site Proton donor is K105.

It belongs to the OMP decarboxylase family.

The enzyme catalyses orotidine 5'-phosphate + H(+) = UMP + CO2. It functions in the pathway pyrimidine metabolism; UMP biosynthesis via de novo pathway; UMP from orotate: step 2/2. The polypeptide is Orotidine 5'-phosphate decarboxylase (URA3) (Sordaria macrospora (strain ATCC MYA-333 / DSM 997 / K(L3346) / K-hell)).